Consider the following 498-residue polypeptide: Cytochrome P450 monooxygenase 71 (498 aa).

A helical transmembrane segment spans residues 7 to 24; that stretch reads YVFALLGILATLYFVRWS. N-linked (GlcNAc...) asparagine glycosylation is present at Asn-425. A heme-binding site is contributed by Cys-440.

The protein belongs to the cytochrome P450 family. Requires heme as cofactor.

The protein resides in the membrane. Its pathway is secondary metabolite biosynthesis. Functionally, cytochrome P450 monooxygenase that is able to use dehydroabietic acid and testosterone as substrates for oxidation, suggesting that the natural substrate(s) may be structurally related to steroid compounds. In Postia placenta (strain ATCC 44394 / Madison 698-R) (Brown rot fungus), this protein is Cytochrome P450 monooxygenase 71.